We begin with the raw amino-acid sequence, 155 residues long: MSTPTSFTFNIAYSVPINKDPSQPTLTLEEFWRGLHRGSEKPQLFAEYVADTEVLPNSKSANEFQRKLIMANGAVHTAKGVELLQDVRNADGLLDDGPDALYLTAVYELHVPDVEPGSERAKEIEREYAQLALGAARTVVETIRRWKVEGGLEDA.

The protein operates within mycotoxin biosynthesis. Functionally, nonribosomal peptide synthetase; part of the gene cluster that mediates the biosynthesis of acetylaranotin, a member of the epipolythiodioxopiperazine (ETP) class of toxins characterized by a disulfide-bridged cyclic dipeptide. The first step of acetylaranotin biosynthesis is performed by the NRPS ataP which produces diketopiperazine cyclo-L-Phe-L-Phe via the condensation of 2 phenylalanines (L-Phe). The ataC domain of ataTC then catalyzes the formation of bishydroxylation of cyclo-L-Phe-L-Phe. The glutathione S-transferase domain ataG in ataIMG further catalyzes the conjugation of two glutathiones to the bishydroxylated intermediate. Next, the dipeptidase ataJ removes the Glu residues. The following step is performed by the carbon sulfur lyase domain ataI of ataIMG which may convert the bis-cysteinyl adduct to yield an epidithiol intermediate. The ataT domain from ataTC then catalyzes the oxidation of the free dithiols, followed by a cyclization step catalyzed by the cytochrome P450 ataF. AtaF probably acts as an epoxidase to promote a dual epoxidation formation at C8 and C9 along with C8' and C9', followed by the spontaneous nucleophilic attack of the amide nitrogens N10 and N10' to yield an intermediate with the pyrrolidine partial structure. The final steps of acetylaranotin biosynthesis involve the acetylation and ring rearrangement of an epitetrathiodiketopiperazine intermediate to produce acetylaranotin. AtaH probably catalyzes the acetylation of epitetrathiodiketopiperazine to produce a diacetate and ataY is responsible for the formation of the dihydrooxepin moiety that converts the diacetate intermediate to acetylaranotin via acetylapoaranotin. Both enzymes could function independently in the absence of the other. The specific function of ataL within the pathway has still to be determined. The acetylaranotin bis-thiomethyltransferase ataS located outside of acetylaranotin gene cluster is the main thiomethyltransferase responsible for converting acetylaranotin and its related intermediates to their methylated forms. This Aspergillus terreus (strain NIH 2624 / FGSC A1156) protein is Acetylaranotin biosynthesis cluster protein L.